A 201-amino-acid polypeptide reads, in one-letter code: Recombination protein RecR (201 aa).

The segment at 57–72 adopts a C4-type zinc-finger fold; the sequence is CKYCRTFTEQEQCTIC. A Toprim domain is found at 81–176; that stretch reads GQICVVESPA…TASRIAHGVP (96 aa).

This sequence belongs to the RecR family.

Functionally, may play a role in DNA repair. It seems to be involved in an RecBC-independent recombinational process of DNA repair. It may act with RecF and RecO. The chain is Recombination protein RecR from Photorhabdus laumondii subsp. laumondii (strain DSM 15139 / CIP 105565 / TT01) (Photorhabdus luminescens subsp. laumondii).